The sequence spans 47 residues: MLPSKRVPFLFTIILFLAGLGQHTTESVLPDCVLYPRCLITKDPCCM.

Residues 1 to 21 form the signal peptide; it reads MLPSKRVPFLFTIILFLAGLG.

Main cells of accessory gland and seminal fluid.

It localises to the secreted. Functionally, responsible for physiological and behavioral changes in mated female flies. This chain is Accessory gland peptide Acp33A (Acp33A), found in Drosophila melanogaster (Fruit fly).